A 218-amino-acid polypeptide reads, in one-letter code: Ras-related protein Rab11E (218 aa).

20–27 lines the GTP pocket; the sequence is GDSGVGKS. An Effector region motif is present at residues 42–50; it reads SKSTIGVEF. Residues 68 to 72 and 126 to 129 each bind GTP; these read DTAGQ and NKSD. Residues cysteine 215 and cysteine 216 are each lipidated (S-geranylgeranyl cysteine).

This sequence belongs to the small GTPase superfamily. Rab family.

Its subcellular location is the cell membrane. This is Ras-related protein Rab11E (RAB11E) from Lotus japonicus (Lotus corniculatus var. japonicus).